Reading from the N-terminus, the 479-residue chain is Glycerol-3-phosphate acyltransferase RAM2 (479 aa).

Transmembrane regions (helical) follow at residues 14–34 (YFAL…LVLA), 37–57 (LAGL…LIFA), 215–235 (SPLM…LACL), and 237–257 (IAAG…ALGV). The short motif at 284-289 (HRTLLD) is the HXXXXD motif element. Residue Asn-448 is glycosylated (N-linked (GlcNAc...) asparagine).

This sequence belongs to the GPAT/DAPAT family.

The protein localises to the membrane. It catalyses the reaction sn-glycerol 3-phosphate + an acyl-CoA = a 1-acyl-sn-glycero-3-phosphate + CoA. The protein operates within lipid metabolism; glycerolipid metabolism. Its function is as follows. Involved in the production of cutin monomers. Esterifies acyl-group from acyl-ACP to the sn-2 position of glycerol-3-phosphate, a step in cutin biosynthesis. Required for colonization of the root by mycorrhizal fungi, and appropriate hyphopodia and arbuscule formation. Cutin monomers act as plant signals that promote colonization by arbuscular mycorrhizal fungi. This signaling function has been recruited by pathogenic oomycetes to facilitate appressoria formation and their own invasion. The protein is Glycerol-3-phosphate acyltransferase RAM2 of Petunia hybrida (Petunia).